Here is a 798-residue protein sequence, read N- to C-terminus: Integrin beta-1 (798 aa).

Residues 1–20 (MNLQLIFWIGLISSICCVFG) form the signal peptide. Residues 21 to 728 (QADENRCLKA…ETPECPTGPD (708 aa)) are Extracellular-facing. The PSI domain occupies 26-76 (RCLKANAKSCGECIQAGPNCGWCVNSTFLQEGMPTSARCDDLEALKKKGCH). Disulfide bonds link C27–C45, C35–C464, C38–C64, C48–C75, C207–C213, C261–C301, C401–C415, C435–C462, C466–C486, C477–C489, C491–C500, C502–C533, C516–C531, C525–C536, C538–C553, C555–C576, C560–C574, C568–C579, C581–C590, C592–C615, C599–C613, C607–C618, C620–C630, C633–C636, C640–C691, C646–C665, C649–C661, and C699–C723. N-linked (GlcNAc...) asparagine glycosylation is present at N50. Basic and acidic residues predominate over residues 75 to 91 (CHPDDIENPRGSKDVKK). The tract at residues 75–107 (CHPDDIENPRGSKDVKKNKNVTNRSKGTAEKLQ) is disordered. Residues N94 and N97 are each glycosylated (N-linked (GlcNAc...) asparagine). The VWFA domain occupies 140 to 378 (DYPIDLYYLM…QLIIDAYNSL (239 aa)). Mg(2+) is bound by residues S152 and S154. The Ca(2+) site is built by S154, D157, D158, and E189. The CX3CL1-binding stretch occupies residues 207–213 (CTSEQNC). N212 carries N-linked (GlcNAc...) asparagine glycosylation. Ca(2+) is bound by residues N244, D246, P248, and E249. E249 provides a ligand contact to Mg(2+). N269 is a glycosylation site (N-linked (GlcNAc...) asparagine). The segment at 295 to 314 (LPNDGQCHLENDVYTMSHYY) is CX3CL1-binding. Residue A362 participates in Ca(2+) binding. 3 N-linked (GlcNAc...) asparagine glycosylation sites follow: N363, N406, and N417. An interaction with TMEM182 region spans residues 383 to 465 (ILENSKLPEG…IILQFICECE (83 aa)). 4 consecutive I-EGF domains span residues 466 to 501 (CQNE…RHCE), 502 to 554 (CSTD…KFCE), 555 to 591 (CDNF…SACD), and 592 to 631 (CSLD…PTCE). N481 is a glycosylation site (N-linked (GlcNAc...) asparagine). N520 is a glycosylation site (N-linked (GlcNAc...) asparagine). An N-linked (GlcNAc...) asparagine glycan is attached at N584. The N-linked (GlcNAc...) asparagine glycan is linked to N669. The helical transmembrane segment at 729 to 751 (IIPIVAGVVAGIVLIGLALLLIW) threads the bilayer. Residues 752–798 (KLLMIIHDTREFAKFEKEKMNAKWDTGENPIYKSAVTTVVNPKYEGK) lie on the Cytoplasmic side of the membrane. The signal for sorting from recycling endosomes; interaction with ACAP1 stretch occupies residues 762–767 (EFAKFE). Residue T777 is modified to Phosphothreonine. Y783 carries the phosphotyrosine modification. The residue at position 785 (S785) is a Phosphoserine. An interaction with ITGB1BP1 region spans residues 785–792 (SAVTTVVN). T789 carries the phosphothreonine modification. The residue at position 794 (K794) is an N6-acetyllysine; alternate. K794 is covalently cross-linked (Glycyl lysine isopeptide (Lys-Gly) (interchain with G-Cter in SUMO1); alternate).

The protein belongs to the integrin beta chain family. As to quaternary structure, interacts with seprase FAP (seprase); the interaction occurs at the cell surface of invadopodia membrane in a collagen-dependent manner. Heterodimer of an alpha and a beta subunit. Beta-1 associates with either alpha-1, alpha-2, alpha-3, alpha-4, alpha-5, alpha-6, alpha-7, alpha-8, alpha-9, alpha-10, alpha-11 or alpha-V. ITGA6:ITGB1 is found in a complex with CD9; interaction takes place in oocytes and is involved in sperm-egg fusion. Binds LGALS3BP and NMRK2, when associated with alpha-7, but not with alpha-5. Interacts with FLNA, FLNB, FLNC and RANBP9. Interacts with KRT1 in the presence of RACK1 and SRC. Interacts with JAML; integrin alpha-4/beta-1 may regulate leukocyte to endothelial cells adhesion by controlling JAML homodimerization. Interacts with RAB21. Interacts (via the cytoplasmic region) with RAB25 (via the hypervariable C-terminal region). Interacts with MYO10. Interacts with ITGB1BP1 (via C-terminal region); the interaction is a prerequisite for focal adhesion disassembly. Interacts with TLN1; the interaction is prevented by competitive binding of ITGB1BP1. Interacts with ACAP1; required for ITGB1 recycling. Interacts with ASAP3. Interacts with FERMT2; the interaction is inhibited in presence of ITGB1BP1. Interacts with DAB2. Interacts with FGR and HCK. Interacts with alpha-7A and alpha-7B in adult skeletal muscle. Interacts with alpha-7B in cardiomyocytes of adult heart. Interacts with EMP2; the interaction may be direct or indirect and ITGB1 has a heterodimer form. ITGA5:ITGB1 interacts with CCN3. ITGA4:ITGB1 is found in a ternary complex with CX3CR1 and CX3CL1. ITGA5:ITGB1 interacts with FBN1. ITGA5:ITGB1 acts as a receptor for fibronectin FN1 and mediates R-G-D-dependent cell adhesion to FN1. ITGA5:ITGB1 interacts with IL1B. Interacts with MDK. ITGA4:ITGB1 interacts with MDK; this interaction mediates MDK-induced osteoblast cells migration through PXN phosphorylation. ITGA6:ITGB1 interacts with MDK; this interaction mediates MDK-induced neurite-outgrowth. ITGA5:ITGB1 interacts with ACE2. Interacts with TMEM182 and LAMB1. Interacts with tensin TNS3; TNS3 also interacts with PEAK1, thus acting as an adapter molecule to bridge the association of PEAK1 with ITGB1. Interacts with tensin TNS4; the interaction displaces tensin TNS3 from the ITGB1 cytoplasmic tail and promotes ITGB1 stability. Integrin ITGA9:ITGB1 interacts with SPP1/OPN (via N-terminus). Integrin ITGA9:ITGB1 interacts with TNC/TNFN3 (via the 3rd Fibronectin type-III domain). Integrins ITGA4:ITGB1 and ITGA9:ITGB1 interact with SVEP1 (via Sushi domain 21); thereby inhibit Ca(2+) intracellular signaling and as a result repress vasocontraction. ITGA4:ITGB1 and ITGA5:ITGB1 interacts with SELP. Interacts with CD248. ITGA5:ITGB1 interacts with IGFBP1. ITGA4:ITGB1 interacts with BCAM. Interacts with ADGRG6.

The protein resides in the cell membrane. It localises to the cell projection. Its subcellular location is the invadopodium membrane. The protein localises to the ruffle membrane. It is found in the recycling endosome. The protein resides in the melanosome. It localises to the lamellipodium. Its subcellular location is the ruffle. The protein localises to the cell junction. It is found in the focal adhesion. Integrins alpha-1/beta-1, alpha-2/beta-1, alpha-10/beta-1 and alpha-11/beta-1 are receptors for collagen. Integrins alpha-1/beta-1 and alpha-2/beta-2 recognize the proline-hydroxylated sequence G-F-P-G-E-R in collagen. Integrins alpha-2/beta-1, alpha-3/beta-1, alpha-4/beta-1, alpha-5/beta-1, alpha-8/beta-1, alpha-10/beta-1, alpha-11/beta-1 and alpha-V/beta-1 are receptors for fibronectin. Alpha-4/beta-1 recognizes one or more domains within the alternatively spliced CS-1 and CS-5 regions of fibronectin. Integrin alpha-5/beta-1 is a receptor for fibrinogen. Integrin alpha-1/beta-1, alpha-2/beta-1, alpha-6/beta-1 and alpha-7/beta-1 are receptors for lamimin. Integrin alpha-6/beta-1 (ITGA6:ITGB1) is present in oocytes and is involved in sperm-egg fusion. Integrin alpha-4/beta-1 is a receptor for VCAM1 and recognizes the sequence Q-I-D-S in VCAM1. Integrin alpha-9/beta-1 is a receptor for VCAM1, cytotactin and osteopontin. It recognizes the sequence A-E-I-D-G-I-E-L in cytotactin. Integrin alpha-3/beta-1 is a receptor for epiligrin, thrombospondin and CSPG4. Integrin alpha-3/beta-1 provides a docking site for FAP (seprase) at invadopodia plasma membranes in a collagen-dependent manner and hence may participate in the adhesion, formation of invadopodia and matrix degradation processes, promoting cell invasion. Alpha-3/beta-1 may mediate with LGALS3 the stimulation by CSPG4 of endothelial cells migration. Integrin alpha-V/beta-1 is a receptor for vitronectin. Beta-1 integrins recognize the sequence R-G-D in a wide array of ligands. When associated with alpha-7/beta-1 integrin, regulates cell adhesion and laminin matrix deposition. Involved in promoting endothelial cell motility and angiogenesis. Involved in osteoblast compaction through the fibronectin fibrillogenesis cell-mediated matrix assembly process and the formation of mineralized bone nodules. May be involved in up-regulation of the activity of kinases such as PKC via binding to KRT1. Together with KRT1 and RACK1, serves as a platform for SRC activation or inactivation. Plays a mechanistic adhesive role during telophase, required for the successful completion of cytokinesis. ITGA4:ITGB1 binds to fractalkine (CX3CL1) and may act as its coreceptor in CX3CR1-dependent fractalkine signaling. ITGA4:ITGB1 and ITGA5:ITGB1 bind to PLA2G2A via a site (site 2) which is distinct from the classical ligand-binding site (site 1) and this induces integrin conformational changes and enhanced ligand binding to site 1. ITGA5:ITGB1 acts as a receptor for fibrillin-1 (FBN1) and mediates R-G-D-dependent cell adhesion to FBN1. ITGA5:ITGB1 is a receptor for IL1B and binding is essential for IL1B signaling. ITGA5:ITGB3 is a receptor for soluble CD40LG and is required for CD40/CD40LG signaling. Plays an important role in myoblast differentiation and fusion during skeletal myogenesis. ITGA9:ITGB1 may play a crucial role in SVEP1/polydom-mediated myoblast cell adhesion. Integrins ITGA9:ITGB1 and ITGA4:ITGB1 repress PRKCA-mediated L-type voltage-gated channel Ca(2+) influx and ROCK-mediated calcium sensitivity in vascular smooth muscle cells via their interaction with SVEP1, thereby inhibit vasocontraction. In Felis catus (Cat), this protein is Integrin beta-1 (ITGB1).